The following is a 301-amino-acid chain: (R)-2-haloacid dehalogenase (301 aa).

The protein belongs to the HAD-like hydrolase superfamily. S-2-haloalkanoic acid dehalogenase family. In terms of assembly, homotetramer.

The catalysed reaction is an (R)-2-haloacid + H2O = a (2S)-2-hydroxycarboxylate + a halide anion + H(+). Catalyzes the hydrolytic dehalogenation of small (R)-2-haloalkanoic acids to yield the corresponding (S)-2-hydroxyalkanoic acids. Acts on acids of short chain lengths, C(2) to C(4), with inversion of configuration at C-2. The protein is (R)-2-haloacid dehalogenase (hadD) of Pseudomonas putida (Arthrobacter siderocapsulatus).